Here is a 478-residue protein sequence, read N- to C-terminus: MNENDENGPSTRLTRAKAAALTTDAPAANGALKKPLQTKKAATGANGTQRKRAALGDVSNVGKADNGETKDAKKATSKTGLTSKATMQSGGVQKLSRSNLSRTAVGAKDNNVKKPATEAKRPGSGSGMGSAMKRTSSQKSLQEKTIQQEEPPRKKVDIEKVVEKQAEAVSVKGDVKAGAQTEELEKPQDFVADLDTEDLDDPLMAAEYVVEIFDYLRELEMETLPNPDYIDHQPDLEWKMRGILVDWLIEVHTRFRLLPETLFLAVNIIDRFLSAEVVALDRLQLVGVAAMFIASKYEEVLSPHVANFSHVADETFSDKEILDAERHILATLEYNMSYPNPMNFLRRISKADNYDIQTRTLGKYLMEISLLDHRFLGYPQSQIGAAAMYLARLILDRGPWDATLAHYAGYTEEEIDEVFRLMVDYLHRPVCHEAFFKKYASKKFLKASIMTRQWAKKYHHLYIDSALTEPYNSIKDNE.

The disordered stretch occupies residues 1 to 153 (MNENDENGPS…KTIQQEEPPR (153 aa)). A compositionally biased stretch (low complexity) spans 16-31 (AKAAALTTDAPAANGA). A compositionally biased stretch (basic and acidic residues) spans 65–74 (DNGETKDAKK). The span at 77–102 (SKTGLTSKATMQSGGVQKLSRSNLSR) shows a compositional bias: polar residues. A compositionally biased stretch (basic and acidic residues) spans 110–121 (NNVKKPATEAKR). Polar residues predominate over residues 133-145 (KRTSSQKSLQEKT).

Belongs to the cyclin family. Cyclin AB subfamily.

Functionally, essential for the control of the cell cycle at the G2/M (mitosis) transition. Interacts with the CDC2 protein kinase to form MPF. G2/M cyclins accumulate steadily during G2 and are abruptly destroyed at mitosis. This is G2/mitotic-specific cyclin-B (nimE) from Emericella nidulans (strain FGSC A4 / ATCC 38163 / CBS 112.46 / NRRL 194 / M139) (Aspergillus nidulans).